Consider the following 291-residue polypeptide: Ribonuclease Z (291 aa).

The Zn(2+) site is built by His-61, His-63, Asp-65, His-66, His-133, Asp-201, and His-257. Asp-65 acts as the Proton acceptor in catalysis.

This sequence belongs to the RNase Z family. In terms of assembly, homodimer. The cofactor is Zn(2+).

It carries out the reaction Endonucleolytic cleavage of RNA, removing extra 3' nucleotides from tRNA precursor, generating 3' termini of tRNAs. A 3'-hydroxy group is left at the tRNA terminus and a 5'-phosphoryl group is left at the trailer molecule.. Its function is as follows. Zinc phosphodiesterase, which displays some tRNA 3'-processing endonuclease activity. Probably involved in tRNA maturation, by removing a 3'-trailer from precursor tRNA. The polypeptide is Ribonuclease Z (Saccharolobus islandicus (strain L.S.2.15 / Lassen #1) (Sulfolobus islandicus)).